Here is a 78-residue protein sequence, read N- to C-terminus: Large ribosomal subunit protein bL28 (78 aa).

It belongs to the bacterial ribosomal protein bL28 family.

In Francisella philomiragia subsp. philomiragia (strain ATCC 25017 / CCUG 19701 / FSC 153 / O#319-036), this protein is Large ribosomal subunit protein bL28.